The following is a 538-amino-acid chain: Solute carrier family 2, facilitated glucose transporter member 9 (538 aa).

Residues M1–S34 are Cytoplasmic-facing. The residue at position 3 (S3) is a Phosphoserine. A helical membrane pass occupies residues F35–Y54. N-linked (GlcNAc...) asparagine glycans are attached at residues N55 and N71. Topologically, residues N55–T88 are extracellular. A helical transmembrane segment spans residues L89–V109. Residues K110 to S120 are Cytoplasmic-facing. A helical transmembrane segment spans residues T121–G143. The Extracellular segment spans residues T144–L148. Residues I149–L170 form a helical membrane-spanning segment. Residues N171–S181 are Cytoplasmic-facing. Residues L182–L200 traverse the membrane as a helical segment. The Extracellular segment spans residues G201–T211. Residues W212–L233 form a helical membrane-spanning segment. The Cytoplasmic portion of the chain corresponds to P234 to Q297. The helical transmembrane segment at V298 to Y319 threads the bilayer. The Extracellular segment spans residues T320–K333. Residues I334–I356 form a helical membrane-spanning segment. Residues E357–R362 are Cytoplasmic-facing. Residues P363–L385 traverse the membrane as a helical segment. At Q386–P390 the chain is on the extracellular side. Residues W391–L418 traverse the membrane as a helical segment. Over T419–P429 the chain is Cytoplasmic. A helical membrane pass occupies residues A430–I453. The Extracellular segment spans residues Q454–D458. Residues S459–L480 form a helical membrane-spanning segment. At P481–V538 the chain is on the cytoplasmic side. The segment at F495 to V538 is disordered. The segment covering N518–V538 has biased composition (polar residues).

This sequence belongs to the major facilitator superfamily. Sugar transporter (TC 2.A.1.1) family. In terms of processing, N-glycosylated. As to expression, highly expressed in the intestine, with high expression in the jejunum and ileum, the segments of the intestine that perform the majority of urate excretion. Isoform 1: Widely expressed. Isoform 1: In kidney, expressed at low levels in proximal tubules. Isoform 2: Primarily expressed in liver and kidney; with specific expression in distal convoluted and connecting tubules of kidney.

It localises to the basolateral cell membrane. It is found in the apical cell membrane. It carries out the reaction urate(out) = urate(in). Its function is as follows. High-capacity urate transporter, which may play a role in the urate reabsorption by proximal tubules. May have a residual high-affinity, low-capacity glucose and fructose transporter activity. Transports urate at rates 45- to 60-fold faster than glucose. Does not transport galactose. May mediate small uptake of adenine but not of other nucleobases. The chain is Solute carrier family 2, facilitated glucose transporter member 9 from Mus musculus (Mouse).